The following is a 164-amino-acid chain: uncharacterized protein (164 aa).

The RDD domain maps to 26–158; that stretch reads YAGFWVRFWA…DYIADTTVVH (133 aa). A run of 2 helical transmembrane segments spans residues 35 to 55 and 66 to 86; these read AFLL…SPLF and MFTF…YFAL.

It is found in the cell membrane. This is an uncharacterized protein from Bacillus subtilis (strain 168).